A 344-amino-acid chain; its full sequence is L-rhamnose-proton symporter (344 aa).

10 helical membrane passes run 4–24, 38–58, 68–88, 101–121, 131–151, 175–195, 214–234, 259–279, 290–310, and 323–343; these read AITM…CFYA, WSVG…ATLL, FSAS…IGNI, MGIG…TPII, TQGG…VGIV, LLLA…MNAA, LPSY…FCFI, LLLS…YAWG, MSWM…GLVL, and VLSL…LGMA.

Belongs to the L-rhamnose transporter (TC 2.A.7.6) family.

It localises to the cell inner membrane. The enzyme catalyses L-rhamnopyranose(in) + H(+)(in) = L-rhamnopyranose(out) + H(+)(out). In terms of biological role, uptake of L-rhamnose across the cytoplasmic membrane with the concomitant transport of protons into the cell (symport system). The chain is L-rhamnose-proton symporter from Klebsiella pneumoniae subsp. pneumoniae (strain ATCC 700721 / MGH 78578).